We begin with the raw amino-acid sequence, 725 residues long: N-alpha-acetyltransferase 35, NatC auxiliary subunit (725 aa).

The interval 548 to 573 (ERIMEEQQKGRSSKKTKKKKKVRPLS) is disordered. Over residues 558–571 (RSSKKTKKKKKVRP) the composition is skewed to basic residues.

Belongs to the MAK10 family. In terms of assembly, component of the N-terminal acetyltransferase C (NatC) complex.

It is found in the cytoplasm. Its function is as follows. Auxillary component of the N-terminal acetyltransferase C (NatC) complex which catalyzes acetylation of N-terminal methionine residues. N-terminal acetylation protects proteins from ubiquitination and degradation by the N-end rule pathway. In Gallus gallus (Chicken), this protein is N-alpha-acetyltransferase 35, NatC auxiliary subunit (NAA35).